The following is a 111-amino-acid chain: Probable 4-amino-4-deoxy-L-arabinose-phosphoundecaprenol flippase subunit ArnE (111 aa).

Residues 1–35 (MIWLTLVFASLLSVAGQLCQKQATCFAAVNKRRKH) are Cytoplasmic-facing. Residues 36 to 56 (IVLWLGLALACLGLAMVLWLL) form a helical membrane-spanning segment. The EamA domain occupies 40 to 109 (LGLALACLGL…IIGGIVILGS (70 aa)). The Periplasmic segment spans residues 57–60 (VLQN). The helical transmembrane segment at 61–81 (VPVGIAYPMLSLNFVWVTLAA) threads the bilayer. At 82–87 (VKLWHE) the chain is on the cytoplasmic side. The helical transmembrane segment at 88 to 108 (PVSLRHWCGLAFIIGGIVILG) threads the bilayer. Topologically, residues 109-111 (STV) are periplasmic.

The protein belongs to the ArnE family. Heterodimer of ArnE and ArnF.

It localises to the cell inner membrane. The protein operates within bacterial outer membrane biogenesis; lipopolysaccharide biosynthesis. Functionally, translocates 4-amino-4-deoxy-L-arabinose-phosphoundecaprenol (alpha-L-Ara4N-phosphoundecaprenol) from the cytoplasmic to the periplasmic side of the inner membrane. The chain is Probable 4-amino-4-deoxy-L-arabinose-phosphoundecaprenol flippase subunit ArnE from Escherichia coli O81 (strain ED1a).